Reading from the N-terminus, the 62-residue chain is Protein translocase subunit SecE (62 aa).

A helical membrane pass occupies residues 40–60 (LLVLAVVGVLAYIIQLALTLI).

It belongs to the SecE/SEC61-gamma family. As to quaternary structure, component of the Sec protein translocase complex. Heterotrimer consisting of SecY (alpha), SecG (beta) and SecE (gamma) subunits. The heterotrimers can form oligomers, although 1 heterotrimer is thought to be able to translocate proteins. Interacts with the ribosome. May interact with SecDF, and other proteins may be involved.

The protein localises to the cell membrane. Functionally, essential subunit of the Sec protein translocation channel SecYEG. Clamps together the 2 halves of SecY. May contact the channel plug during translocation. This chain is Protein translocase subunit SecE, found in Saccharolobus solfataricus (strain ATCC 35092 / DSM 1617 / JCM 11322 / P2) (Sulfolobus solfataricus).